The sequence spans 136 residues: Histone H2A (136 aa).

A compositionally biased stretch (gly residues) spans 1-11 (MTGGKSAGGKA). The interval 1–23 (MTGGKSAGGKAGTTKNAQSRSSK) is disordered. N6-acetyllysine occurs at positions 5 and 10. The residue at position 107 (Q107) is an N5-methylglutamine. S133 is modified (phosphoserine). The short motif at 133-134 (SQ) is the [ST]-Q motif element.

This sequence belongs to the histone H2A family. The nucleosome is a histone octamer containing two molecules each of H2A, H2B, H3 and H4 assembled in one H3-H4 heterotetramer and two H2A-H2B heterodimers. The octamer wraps approximately 147 bp of DNA. Phosphorylated to form H2AS128ph (gamma-H2A) in response to DNA double-strand breaks (DSBs) generated by exogenous genotoxic agents and by stalled replication forks. Phosphorylation is dependent on the DNA damage checkpoint kinases MEC1/ATR and TEL1/ATM, spreads on either side of a detected DSB site and may mark the surrounding chromatin for recruitment of proteins required for DNA damage signaling and repair. Gamma-H2A is removed from the DNA prior to the strand invasion-primer extension step of the repair process and subsequently dephosphorylated. Dephosphorylation is necessary for efficient recovery from the DNA damage checkpoint. In terms of processing, acetylated by ESA1 to form H2AK4ac and H2AK7ac.

It localises to the nucleus. It is found in the chromosome. Functionally, core component of nucleosome which plays a central role in DNA double strand break (DSB) repair. Nucleosomes wrap and compact DNA into chromatin, limiting DNA accessibility to the cellular machineries which require DNA as a template. Histones thereby play a central role in transcription regulation, DNA repair, DNA replication and chromosomal stability. DNA accessibility is regulated via a complex set of post-translational modifications of histones, also called histone code, and nucleosome remodeling. In Botryotinia fuckeliana (strain B05.10) (Noble rot fungus), this protein is Histone H2A (hta1).